We begin with the raw amino-acid sequence, 451 residues long: Bifunctional protein GlmU (451 aa).

The segment at 1–225 is pyrophosphorylase; it reads MSLAVVILAA…EFEIQGVNDR (225 aa). Residues 8–11, K22, Q73, 78–79, 99–101, G135, E150, N165, and N223 contribute to the UDP-N-acetyl-alpha-D-glucosamine site; these read LAAG, GT, and YGD. Residue D101 coordinates Mg(2+). Position 223 (N223) interacts with Mg(2+). Residues 226–246 form a linker region; that stretch reads IQLAQLEREWQKHIAEVIMSK. The N-acetyltransferase stretch occupies residues 247–451; that stretch reads GVSVADPSRI…IDTWQRPVKK (205 aa). Positions 329 and 347 each coordinate UDP-N-acetyl-alpha-D-glucosamine. H359 acts as the Proton acceptor in catalysis. 2 residues coordinate UDP-N-acetyl-alpha-D-glucosamine: Y362 and N373. Acetyl-CoA is bound by residues A376, 382-383, S401, A419, and R436; that span reads NY.

In the N-terminal section; belongs to the N-acetylglucosamine-1-phosphate uridyltransferase family. The protein in the C-terminal section; belongs to the transferase hexapeptide repeat family. Homotrimer. Mg(2+) is required as a cofactor.

It is found in the cytoplasm. It catalyses the reaction alpha-D-glucosamine 1-phosphate + acetyl-CoA = N-acetyl-alpha-D-glucosamine 1-phosphate + CoA + H(+). The catalysed reaction is N-acetyl-alpha-D-glucosamine 1-phosphate + UTP + H(+) = UDP-N-acetyl-alpha-D-glucosamine + diphosphate. It functions in the pathway nucleotide-sugar biosynthesis; UDP-N-acetyl-alpha-D-glucosamine biosynthesis; N-acetyl-alpha-D-glucosamine 1-phosphate from alpha-D-glucosamine 6-phosphate (route II): step 2/2. Its pathway is nucleotide-sugar biosynthesis; UDP-N-acetyl-alpha-D-glucosamine biosynthesis; UDP-N-acetyl-alpha-D-glucosamine from N-acetyl-alpha-D-glucosamine 1-phosphate: step 1/1. The protein operates within bacterial outer membrane biogenesis; LPS lipid A biosynthesis. Catalyzes the last two sequential reactions in the de novo biosynthetic pathway for UDP-N-acetylglucosamine (UDP-GlcNAc). The C-terminal domain catalyzes the transfer of acetyl group from acetyl coenzyme A to glucosamine-1-phosphate (GlcN-1-P) to produce N-acetylglucosamine-1-phosphate (GlcNAc-1-P), which is converted into UDP-GlcNAc by the transfer of uridine 5-monophosphate (from uridine 5-triphosphate), a reaction catalyzed by the N-terminal domain. The protein is Bifunctional protein GlmU of Francisella philomiragia subsp. philomiragia (strain ATCC 25017 / CCUG 19701 / FSC 153 / O#319-036).